Consider the following 198-residue polypeptide: Protein hunchback (198 aa).

Disordered regions lie at residues 16–116 (SHHH…NPMQ) and 158–198 (LTPP…KYMA). The span at 17-31 (HHHHHHHAHHSHHQH) shows a compositional bias: basic residues. 2 stretches are compositionally biased toward low complexity: residues 35-46 (SNSNSNASSPHQ) and 68-83 (QQQQQQQQQQQQQQQQ). A compositionally biased stretch (polar residues) spans 95 to 105 (PSPSNNDQNSP). Over residues 179–198 (EPEKEHDLMSNSSEDMKYMA) the composition is skewed to basic and acidic residues.

Belongs to the hunchback C2H2-type zinc-finger protein family.

Its subcellular location is the nucleus. Functionally, gap class segmentation protein that controls development of head structures. The protein is Protein hunchback (hb) of Drosophila cyrtoloma (Fruit fly).